The sequence spans 589 residues: ATP-dependent lipid A-core flippase (589 aa).

A run of 5 helical transmembrane segments spans residues 29-49, 70-90, 157-177, 261-281, and 283-303; these read LLLV…TGFL, WLPV…YITD, VIGA…TILV, MIGA…ALAG, and LTAG…PGLK. The 283-residue stretch at 32–314 folds into the ABC transmembrane type-1 domain; the sequence is VAALIAALIE…LTNVQNMVQR (283 aa). In terms of domain architecture, ABC transporter spans 346-582; it reads IEFRDVTARY…GGLYSHLHGM (237 aa). An ATP-binding site is contributed by 380–387; sequence GRSGSGKS.

This sequence belongs to the ABC transporter superfamily. Lipid exporter (TC 3.A.1.106) family. Homodimer.

The protein resides in the cell inner membrane. The catalysed reaction is ATP + H2O + lipid A-core oligosaccharideSide 1 = ADP + phosphate + lipid A-core oligosaccharideSide 2.. Involved in lipopolysaccharide (LPS) biosynthesis. Translocates lipid A-core from the inner to the outer leaflet of the inner membrane. Transmembrane domains (TMD) form a pore in the inner membrane and the ATP-binding domain (NBD) is responsible for energy generation. This chain is ATP-dependent lipid A-core flippase, found in Xanthomonas oryzae pv. oryzae (strain MAFF 311018).